Here is a 201-residue protein sequence, read N- to C-terminus: Large ribosomal subunit protein eL15 (201 aa).

Belongs to the eukaryotic ribosomal protein eL15 family.

This chain is Large ribosomal subunit protein eL15 (RPL15), found in Quercus suber (Cork oak).